Here is a 566-residue protein sequence, read N- to C-terminus: Proline--tRNA ligase (566 aa).

The protein belongs to the class-II aminoacyl-tRNA synthetase family. ProS type 1 subfamily. In terms of assembly, homodimer.

The protein localises to the cytoplasm. It carries out the reaction tRNA(Pro) + L-proline + ATP = L-prolyl-tRNA(Pro) + AMP + diphosphate. Functionally, catalyzes the attachment of proline to tRNA(Pro) in a two-step reaction: proline is first activated by ATP to form Pro-AMP and then transferred to the acceptor end of tRNA(Pro). As ProRS can inadvertently accommodate and process non-cognate amino acids such as alanine and cysteine, to avoid such errors it has two additional distinct editing activities against alanine. One activity is designated as 'pretransfer' editing and involves the tRNA(Pro)-independent hydrolysis of activated Ala-AMP. The other activity is designated 'posttransfer' editing and involves deacylation of mischarged Ala-tRNA(Pro). The misacylated Cys-tRNA(Pro) is not edited by ProRS. The sequence is that of Proline--tRNA ligase from Coxiella burnetii (strain RSA 493 / Nine Mile phase I).